The sequence spans 375 residues: Alcohol dehydrogenase 1 (375 aa).

The residue at position 2 (Ser2) is an N-acetylserine. Residues Cys47, His68, Cys98, Cys101, Cys104, Cys112, and Cys175 each contribute to the Zn(2+) site. NAD(+) is bound by residues 200–205 (WSGRVG), Asp224, and Lys229. At Lys234 the chain carries N6-succinyllysine. An NAD(+)-binding site is contributed by 293 to 295 (VGV). N6-succinyllysine is present on Lys340. Arg370 lines the NAD(+) pocket.

Belongs to the zinc-containing alcohol dehydrogenase family. Class-I subfamily. In terms of assembly, homodimer. Requires Zn(2+) as cofactor.

It is found in the cytoplasm. It carries out the reaction a primary alcohol + NAD(+) = an aldehyde + NADH + H(+). The enzyme catalyses a secondary alcohol + NAD(+) = a ketone + NADH + H(+). This chain is Alcohol dehydrogenase 1 (ADH1), found in Geomys knoxjonesi (Jones' pocket gopher).